The following is a 321-amino-acid chain: Malate dehydrogenase (321 aa).

Residues 10 to 15 and Asp34 each bind NAD(+); that span reads GGGQIG. Substrate-binding residues include Arg83 and Arg89. NAD(+)-binding positions include Asn96 and 119–121; that span reads ISN. Residues Asn121 and Arg152 each contribute to the substrate site. His176 (proton acceptor) is an active-site residue.

It belongs to the LDH/MDH superfamily. MDH type 3 family.

It carries out the reaction (S)-malate + NAD(+) = oxaloacetate + NADH + H(+). In terms of biological role, catalyzes the reversible oxidation of malate to oxaloacetate. The protein is Malate dehydrogenase of Trichlorobacter lovleyi (strain ATCC BAA-1151 / DSM 17278 / SZ) (Geobacter lovleyi).